We begin with the raw amino-acid sequence, 118 residues long: Ribonuclease P protein component (118 aa).

Belongs to the RnpA family. Consists of a catalytic RNA component (M1 or rnpB) and a protein subunit.

It carries out the reaction Endonucleolytic cleavage of RNA, removing 5'-extranucleotides from tRNA precursor.. Functionally, RNaseP catalyzes the removal of the 5'-leader sequence from pre-tRNA to produce the mature 5'-terminus. It can also cleave other RNA substrates such as 4.5S RNA. The protein component plays an auxiliary but essential role in vivo by binding to the 5'-leader sequence and broadening the substrate specificity of the ribozyme. The chain is Ribonuclease P protein component from Levilactobacillus brevis (strain ATCC 367 / BCRC 12310 / CIP 105137 / JCM 1170 / LMG 11437 / NCIMB 947 / NCTC 947) (Lactobacillus brevis).